The sequence spans 351 residues: Photosystem II D2 protein (351 aa).

The helical transmembrane segment at 39-59 (TAYLAIGGWLTGTTFVTSWYT) threads the bilayer. His-116 contributes to the chlorophyll a binding site. A helical membrane pass occupies residues 123–139 (GFMLRQFELARLIGIRP). 2 residues coordinate pheophytin a: Gln-128 and Asn-141. Residues 151–164 (VFVSVFLIYPLGQS) form a helical membrane-spanning segment. His-196 is a chlorophyll a binding site. Residues 206–226 (GALLSAIHGVTVENTLYQDGE) traverse the membrane as a helical segment. Residues His-213 and Phe-260 each contribute to the a plastoquinone site. Residue His-213 participates in Fe cation binding. His-267 contributes to the Fe cation binding site. Residues 277–293 (GLWTSSIGIIGLALNLR) form a helical membrane-spanning segment.

Belongs to the reaction center PufL/M/PsbA/D family. PSII is composed of 1 copy each of membrane proteins PsbA, PsbB, PsbC, PsbD, PsbE, PsbF, PsbH, PsbI, PsbJ, PsbK, PsbL, PsbM, PsbT, PsbX, PsbY, PsbZ, Psb30/Ycf12, peripheral proteins PsbO, CyanoQ (PsbQ), PsbU, PsbV and a large number of cofactors. It forms dimeric complexes. Requires The D1/D2 heterodimer binds P680, chlorophylls that are the primary electron donor of PSII, and subsequent electron acceptors. It shares a non-heme iron and each subunit binds pheophytin, quinone, additional chlorophylls, carotenoids and lipids. There is also a Cl(-1) ion associated with D1 and D2, which is required for oxygen evolution. The PSII complex binds additional chlorophylls, carotenoids and specific lipids. as cofactor.

Its subcellular location is the host cellular thylakoid membrane. It carries out the reaction 2 a plastoquinone + 4 hnu + 2 H2O = 2 a plastoquinol + O2. In terms of biological role, photosystem II (PSII) is a light-driven water:plastoquinone oxidoreductase that uses light energy to abstract electrons from H(2)O, generating O(2) and a proton gradient subsequently used for ATP formation. It consists of a core antenna complex that captures photons, and an electron transfer chain that converts photonic excitation into a charge separation. The D1/D2 (PsbA/PsbD) reaction center heterodimer binds P680, the primary electron donor of PSII as well as several subsequent electron acceptors. D2 is needed for assembly of a stable PSII complex. The polypeptide is Photosystem II D2 protein (psbD) (Synechococcus phage S-RSM2).